The chain runs to 234 residues: Adenosine 5'-phosphosulfate reductase (234 aa).

[4Fe-4S] cluster is bound by residues C120, C121, C203, and C206. C229 (nucleophile; cysteine thiosulfonate intermediate) is an active-site residue.

It belongs to the PAPS reductase family. CysH subfamily. Requires [4Fe-4S] cluster as cofactor.

The protein localises to the cytoplasm. It carries out the reaction [thioredoxin]-disulfide + sulfite + AMP + 2 H(+) = adenosine 5'-phosphosulfate + [thioredoxin]-dithiol. It functions in the pathway sulfur metabolism; hydrogen sulfide biosynthesis; sulfite from sulfate. Its function is as follows. Catalyzes the formation of sulfite from adenosine 5'-phosphosulfate (APS) using thioredoxin as an electron donor. The chain is Adenosine 5'-phosphosulfate reductase from Bacillus cereus (strain AH820).